A 276-amino-acid chain; its full sequence is Eukaryotic translation initiation factor 3 subunit G (276 aa).

Serine 148 carries the phosphoserine modification. Residues 195 to 274 (TTLKISQLNS…LILHLEWSKK (80 aa)) enclose the RRM domain.

The protein belongs to the eIF-3 subunit G family. Component of the eukaryotic translation initiation factor 3 (eIF-3) complex.

Its subcellular location is the cytoplasm. RNA-binding component of the eukaryotic translation initiation factor 3 (eIF-3) complex, which is involved in protein synthesis of a specialized repertoire of mRNAs and, together with other initiation factors, stimulates binding of mRNA and methionyl-tRNAi to the 40S ribosome. The eIF-3 complex specifically targets and initiates translation of a subset of mRNAs involved in cell proliferation. This subunit can bind 18S rRNA. This is Eukaryotic translation initiation factor 3 subunit G from Debaryomyces hansenii (strain ATCC 36239 / CBS 767 / BCRC 21394 / JCM 1990 / NBRC 0083 / IGC 2968) (Yeast).